Reading from the N-terminus, the 374-residue chain is uncharacterized protein (374 aa).

The disordered stretch occupies residues 197-223 (GTTTTTNNNNNNNNNNNNNNNNGTNIT). Over residues 198-223 (TTTTTNNNNNNNNNNNNNNNNGTNIT) the composition is skewed to low complexity. The stretch at 302–342 (DEVSDCNDINTNLKKKRKQQEQLQIEKEKKLLTIQQEQTKI) forms a coiled coil.

This is an uncharacterized protein from Dictyostelium discoideum (Social amoeba).